Here is a 194-residue protein sequence, read N- to C-terminus: Molybdenum cofactor guanylyltransferase (194 aa).

GTP contacts are provided by residues 12-14 (LAG), K25, N53, D71, and D101. D101 lines the Mg(2+) pocket.

The protein belongs to the MobA family. In terms of assembly, monomer. Mg(2+) is required as a cofactor.

It is found in the cytoplasm. It catalyses the reaction Mo-molybdopterin + GTP + H(+) = Mo-molybdopterin guanine dinucleotide + diphosphate. In terms of biological role, transfers a GMP moiety from GTP to Mo-molybdopterin (Mo-MPT) cofactor (Moco or molybdenum cofactor) to form Mo-molybdopterin guanine dinucleotide (Mo-MGD) cofactor. This Escherichia coli O157:H7 protein is Molybdenum cofactor guanylyltransferase.